Consider the following 190-residue polypeptide: Subtilisin inhibitor CLSI-II (190 aa).

2 disulfide bridges follow: C44–C88 and C142–C149.

It belongs to the protease inhibitor I3 (leguminous Kunitz-type inhibitor) family. As to quaternary structure, forms active dimers on storage in aqueous solution, possibly through formation of an intermolecular disulfide bond. In terms of processing, the N-terminal Asn is removed in about 50% of both the CLSI-II and CLSI-III chains.

Its subcellular location is the secreted. In terms of biological role, inhibits subtilisin-type microbial serine proteases incuding proteinase K, subtilisin BPN', subtilisin Carlsberg and subtilisin E in a non-stoichiometric manner. Weakly inhibits A.oryzae protease and some metalloproteases including pronase E. Does not inhibit trypsin, chymotrypsin, S.griseus alkaline protease or A.lyticus lysyl endopeptidase. CLSI-II has a wider inhibitory specificity than CLSI-III. This chain is Subtilisin inhibitor CLSI-II, found in Canavalia lineata (Beach bean).